A 319-amino-acid chain; its full sequence is Acetyl-coenzyme A carboxylase carboxyl transferase subunit alpha (319 aa).

The CoA carboxyltransferase C-terminal domain occupies 35-296 (NLDEEVQRLR…KAQLLADLSD (262 aa)).

Belongs to the AccA family. In terms of assembly, acetyl-CoA carboxylase is a heterohexamer composed of biotin carboxyl carrier protein (AccB), biotin carboxylase (AccC) and two subunits each of ACCase subunit alpha (AccA) and ACCase subunit beta (AccD).

It localises to the cytoplasm. The catalysed reaction is N(6)-carboxybiotinyl-L-lysyl-[protein] + acetyl-CoA = N(6)-biotinyl-L-lysyl-[protein] + malonyl-CoA. It functions in the pathway lipid metabolism; malonyl-CoA biosynthesis; malonyl-CoA from acetyl-CoA: step 1/1. In terms of biological role, component of the acetyl coenzyme A carboxylase (ACC) complex. First, biotin carboxylase catalyzes the carboxylation of biotin on its carrier protein (BCCP) and then the CO(2) group is transferred by the carboxyltransferase to acetyl-CoA to form malonyl-CoA. This chain is Acetyl-coenzyme A carboxylase carboxyl transferase subunit alpha, found in Yersinia enterocolitica serotype O:8 / biotype 1B (strain NCTC 13174 / 8081).